The following is a 628-amino-acid chain: Alpha-L-arabinofuranosidase A (628 aa).

Residues 1-25 (MVAFSALSGVSAVSLLLSLVQNAHG) form the signal peptide. N-linked (GlcNAc...) asparagine glycosylation is found at Asn36, Asn51, Asn74, Asn152, Asn171, Asn260, Asn359, Asn440, Asn493, and Asn610.

The protein belongs to the glycosyl hydrolase 51 family.

It catalyses the reaction Hydrolysis of terminal non-reducing alpha-L-arabinofuranoside residues in alpha-L-arabinosides.. Its pathway is glycan metabolism; L-arabinan degradation. In terms of biological role, acts only on small linear 1,5-alpha-linked L-arabinofuranosyl oligosaccharides. In Aspergillus niger, this protein is Alpha-L-arabinofuranosidase A (abfA).